The primary structure comprises 895 residues: La RNA-binding domain-containing protein LHP1 (895 aa).

Disordered regions lie at residues 24–265 (ANGN…PPPS), 285–344 (SATS…HDAT), 359–590 (GEDK…LGHG), 796–857 (PDAA…AQDV), and 870–895 (VNGEIKEKEEVKAMENEGEESENYEQ). Residues 31–75 (SSPSSSSSATPEPTSLSSSTSGKKAFSTATSKSGQQKQGSSPQPG) show a composition bias toward low complexity. Over residues 95–143 (QRTDRSEEKEKRGSSSKNWRERSHRDEKNQDDGEKRNGRERSKKEKGDK) the composition is skewed to basic and acidic residues. Over residues 152–170 (SATSSEKTAKSLSSSTKNA) the composition is skewed to low complexity. Composition is skewed to polar residues over residues 172–184 (GVTSSSQGENPIA) and 192–216 (KAQNDSTFRSSSAAAPVGPTTSTIN). A compositionally biased stretch (basic and acidic residues) spans 228 to 244 (DNWRARPAKVEKNEKTE). Residues 251-260 (QAQPQPQRQL) show a composition bias toward low complexity. A compositionally biased stretch (basic and acidic residues) spans 296-314 (KSDKEKSLTNGMVKEEDSG). Low complexity predominate over residues 325–336 (AAAAAAAGTSST). Basic and acidic residues-rich tracts occupy residues 359–371 (GEDKKEKAKERLN), 405–428 (HAAEQSRRQNRMEAKKRSSGREGG), 452–468 (EGKKARKEGAQQKDGHA), and 485–495 (GDVKETKEGDA). A compositionally biased stretch (low complexity) spans 496 to 508 (RSASQQESSSHRS). The segment covering 510-521 (PSISASANTGID) has biased composition (polar residues). The segment covering 563–572 (RGSFGGGRAR) has biased composition (gly residues). The region spanning 706–796 (VPNLDPLRFY…GAESHRWVLP (91 aa)) is the HTH La-type RNA-binding domain. Ser-847 carries the post-translational modification Phosphoserine. A compositionally biased stretch (basic and acidic residues) spans 873 to 884 (EIKEKEEVKAME). The segment covering 885-895 (NEGEESENYEQ) has biased composition (acidic residues).

Its function is as follows. May act as an RNA-binding protein. The protein is La RNA-binding domain-containing protein LHP1 of Cryptococcus neoformans var. grubii serotype A (strain H99 / ATCC 208821 / CBS 10515 / FGSC 9487) (Filobasidiella neoformans var. grubii).